A 475-amino-acid polypeptide reads, in one-letter code: Doublecortin domain-containing protein 2 (475 aa).

2 Doublecortin domains span residues 17–100 and 139–221; these read KSVL…LNYL and CTIF…LPYS. Positions 234–475 are disordered; sequence YGQKASSLPP…ESNKASSAVA (242 aa). The span at 252–272 shows a compositional bias: polar residues; sequence GSGNYRQSKSTIGSSDNSSPQ. S270 is modified (phosphoserine). Residues 353–365 show a composition bias toward basic and acidic residues; that stretch reads EKTSKDANQKDDF. The segment covering 407-419 has biased composition (acidic residues); sequence TDEENGEELDQVT. Residues 455–475 show a composition bias toward polar residues; that stretch reads TVTSPQENEGNESNKASSAVA.

Interacts with DVL1, DVL2 and DVL3. As to expression, expressed in hair cells of the inner ear.

It is found in the cell projection. It localises to the cilium. The protein localises to the cytoplasm. Its subcellular location is the cytoskeleton. The protein resides in the cilium axoneme. It is found in the kinocilium. In terms of biological role, protein that plays a role in the inhibition of canonical Wnt signaling pathway. May be involved in neuronal migration during development of the cerebral neocortex. Involved in the control of ciliogenesis and ciliary length. The protein is Doublecortin domain-containing protein 2 (Dcdc2) of Rattus norvegicus (Rat).